Reading from the N-terminus, the 728-residue chain is MDIIHHFHNGQTIFDIMMTRIINNRNFQRMIDLEAPHTKQCYFTILNEQETISNVPVGTGLCVFTYHPQNRISFDELNRIFKYTNDGVYLRQVFLPTHIPRHYKCRINDQQYTNMVILGKRYDLRKSETYIELIQLGLDVISDVNVIYWTSKQNYIDATKYLISIGANIKTAIYSASKFGNLDLIISIIDGKNKDIILTAVKCMIADYHLDLAKEMISIYSELLGTEVVELTTYLESNSKLVKSTKSTKSSGSPKSIKPKKSNQNNNAKINVSQNDNSTICFDKKVQQNEITVDKMSSAKEQALNVYKEIENMENFILNKINITKKKALDKIKEIENIENTVVEKLEDKITKSNVSITNTDTITQAIISENLNSLDLLIRQGYDINKILYLACINNKKNVIDYLIDNKGANYEQVHKQLLDSKHHYKNDSTVKYLAKIIMTKSQFENVTDTDEIQQVSKKHYFKEPIHIPLGLGKDDDLSPIMVACRASKNDDQLDLVKMLVSYGFNINSRDKIGRSALHYAVNGSNRKIIEYLLALGADYSFRDNNGDTPMMLAKKSNNLELLDLFQSVPKDTKTIEPKKVTNTTDKTNLNQDIKTAMSICLSSINDNQFESVQKLIMSGFNVSSKDDTKKTLLHMAVVNNNLRIVELLINSGININSQDNLGKTPLMLACQYSHRDSKLAIVEFLLNNNAKILIKAKNNMTAIDLMSKTYNNNIYNLLCERLSINH.

2 ANK repeats span residues 142-171 (SDVN…NIKT) and 173-198 (IYSA…DIIL). Over residues 244–267 (STKSTKSSGSPKSIKPKKSNQNNN) the composition is skewed to low complexity. The tract at residues 244–271 (STKSTKSSGSPKSIKPKKSNQNNNAKIN) is disordered. Residues 292 to 338 (TVDKMSSAKEQALNVYKEIENMENFILNKINITKKKALDKIKEIENI) are a coiled coil. ANK repeat units follow at residues 358–383 (TNTD…RQGY), 384–414 (DINK…NYEQ), 477–510 (DDLS…NINS), 514–543 (IGRS…DYSF), 547–576 (NGDT…DTKT), 594–626 (DIKT…NVSS), 630–659 (TKKT…NINS), and 663–696 (LGKT…KILI).

The chain is Putative ankyrin repeat protein L271 from Acanthamoeba polyphaga (Amoeba).